The following is a 195-amino-acid chain: Erythropoietin (195 aa).

Residues 1–28 form the signal peptide; that stretch reads MGVRGRLALLPLALLCLLVLALGLPVLG. Cystine bridges form between cysteine 35/cysteine 190 and cysteine 57/cysteine 61. A glycan (N-linked (GlcNAc...) asparagine) is linked at asparagine 52. N-linked (GlcNAc...) asparagine glycans are attached at residues asparagine 66 and asparagine 111.

It belongs to the EPO/TPO family.

The protein localises to the secreted. Functionally, hormone involved in the regulation of erythrocyte proliferation and differentiation and the maintenance of a physiological level of circulating erythrocyte mass. Binds to EPOR leading to EPOR dimerization and JAK2 activation thereby activating specific downstream effectors, including STAT1 and STAT3. The chain is Erythropoietin (EPO) from Oryctolagus cuniculus (Rabbit).